The primary structure comprises 336 residues: Dihydroorotate dehydrogenase (quinone) (336 aa).

FMN is bound by residues alanine 62–lysine 66 and threonine 86. Residue lysine 66 participates in substrate binding. Asparagine 111–phenylalanine 115 is a substrate binding site. Residues asparagine 139 and asparagine 172 each contribute to the FMN site. Residue asparagine 172 coordinates substrate. Serine 175 acts as the Nucleophile in catalysis. Asparagine 177 provides a ligand contact to substrate. Residues lysine 217 and threonine 245 each contribute to the FMN site. Asparagine 246–threonine 247 serves as a coordination point for substrate. FMN-binding positions include glycine 268, glycine 297, and tyrosine 318–serine 319.

This sequence belongs to the dihydroorotate dehydrogenase family. Type 2 subfamily. As to quaternary structure, monomer. FMN is required as a cofactor.

It is found in the cell membrane. It carries out the reaction (S)-dihydroorotate + a quinone = orotate + a quinol. The protein operates within pyrimidine metabolism; UMP biosynthesis via de novo pathway; orotate from (S)-dihydroorotate (quinone route): step 1/1. Its function is as follows. Catalyzes the conversion of dihydroorotate to orotate with quinone as electron acceptor. The sequence is that of Dihydroorotate dehydrogenase (quinone) from Serratia proteamaculans (strain 568).